The primary structure comprises 311 residues: Metal-staphylopine import system permease protein CntB (311 aa).

The next 6 membrane-spanning stretches (helical) occupy residues 9-29 (IALMFPLVIVVSFMTFLLTYI), 105-125 (LTIISSVMVMITSIILGVVSA), 139-159 (VAFFLTALPSYWIASILIIYV), 173-193 (GPESYILPVIVITIAYAGIYF), 237-257 (IFCMSIPMIMGGLVVIEYIFA), and 274-294 (FPVIQAYVLIVAVLFIVFNTL). One can recognise an ABC transmembrane type-1 domain in the interval 99–295 (FMNTLKLTII…VLFIVFNTLA (197 aa)).

It belongs to the binding-protein-dependent transport system permease family. As to quaternary structure, the complex is composed of two ATP-binding proteins (CntD and CntF), two transmembrane proteins (CntB and CntC) and a solute-binding protein (CntA).

It is found in the cell membrane. Functionally, part of the ABC transporter complex CntABCDF (Opp1) involved in the uptake of metal in complex with the metallophore staphylopine (StP). May be involved in the import of a large array of divalent metals ions such as nickel, cobalt, zinc, copper and iron. Probably responsible for the translocation of the substrate across the membrane. This chain is Metal-staphylopine import system permease protein CntB, found in Staphylococcus aureus (strain Mu50 / ATCC 700699).